Here is a 598-residue protein sequence, read N- to C-terminus: Urease subunit alpha (598 aa).

Residues His141, His143, and Lys223 each contribute to the Ni(2+) site. Lys223 is subject to N6-carboxylysine. His225 is a binding site for substrate. The Ni(2+) site is built by His252 and His278. His326 serves as the catalytic Proton donor. Asp366 serves as a coordination point for Ni(2+).

Belongs to the metallo-dependent hydrolases superfamily. Urease alpha subunit family. Heterotrimer of UreA (gamma), UreB (beta) and UreC (alpha) subunits. Three heterotrimers associate to form the active enzyme. Ni cation is required as a cofactor. Post-translationally, carboxylation allows a single lysine to coordinate two nickel ions.

The protein localises to the cytoplasm. It carries out the reaction urea + 2 H2O + H(+) = hydrogencarbonate + 2 NH4(+). It functions in the pathway nitrogen metabolism; urea degradation; CO(2) and NH(3) from urea (urease route): step 1/1. The protein is Urease subunit alpha of Ureaplasma parvum serovar 3 (strain ATCC 27815 / 27 / NCTC 11736).